A 339-amino-acid chain; its full sequence is Putative clathrin assembly protein At1g14686 (339 aa).

Positions 16–148 (SLIAADDILT…ILFHDGNRHR (133 aa)) constitute an ENTH domain. Residues 283 to 307 (ESSEESAERTEIAEEEEEEEEEIET) form a disordered region. A compositionally biased stretch (acidic residues) spans 295–305 (AEEEEEEEEEI).

The protein resides in the membrane. The protein localises to the clathrin-coated pit. It localises to the golgi apparatus. It is found in the cytoplasmic vesicle. Its subcellular location is the clathrin-coated vesicle. This chain is Putative clathrin assembly protein At1g14686, found in Arabidopsis thaliana (Mouse-ear cress).